Reading from the N-terminus, the 189-residue chain is Chitin synthase 3 (189 aa).

This sequence belongs to the chitin synthase family. Class II subfamily.

Its subcellular location is the cell membrane. It carries out the reaction [(1-&gt;4)-N-acetyl-beta-D-glucosaminyl](n) + UDP-N-acetyl-alpha-D-glucosamine = [(1-&gt;4)-N-acetyl-beta-D-glucosaminyl](n+1) + UDP + H(+). Its function is as follows. Polymerizes chitin, a structural polymer of the cell wall and septum, by transferring the sugar moiety of UDP-GlcNAc to the non-reducing end of the growing chitin polymer. This chain is Chitin synthase 3 (CHS3), found in Ajellomyces capsulatus (Darling's disease fungus).